The sequence spans 602 residues: Threonine--tRNA ligase (602 aa).

Residues aspartate 208–proline 499 are catalytic. 3 residues coordinate Zn(2+): cysteine 300, histidine 351, and histidine 476.

This sequence belongs to the class-II aminoacyl-tRNA synthetase family. As to quaternary structure, homodimer. It depends on Zn(2+) as a cofactor.

The protein resides in the cytoplasm. It carries out the reaction tRNA(Thr) + L-threonine + ATP = L-threonyl-tRNA(Thr) + AMP + diphosphate + H(+). Functionally, catalyzes the attachment of threonine to tRNA(Thr) in a two-step reaction: L-threonine is first activated by ATP to form Thr-AMP and then transferred to the acceptor end of tRNA(Thr). Also edits incorrectly charged L-seryl-tRNA(Thr). This is Threonine--tRNA ligase from Campylobacter jejuni subsp. jejuni serotype O:23/36 (strain 81-176).